Consider the following 2067-residue polypeptide: Non-reducing polyketide synthase PKS12 (2067 aa).

The interval 4–241 is N-terminal acylcarrier protein transacylase (SAT) domain; it reads FVFGDQSTRF…LPVPIYAPYH (238 aa). A disordered region spans residues 350-373; sequence NSMGPKASTSHSSAETQTESSSKN. The span at 356-373 shows a compositional bias: polar residues; sequence ASTSHSSAETQTESSSKN. In terms of domain architecture, Ketosynthase family 3 (KS3) spans 373 to 808; the sequence is NSKIAIVAMS…GGNSAVLLQD (436 aa). Residues cysteine 545, histidine 680, and histidine 725 each act as for beta-ketoacyl synthase activity in the active site. The interval 912–1199 is malonyl-CoA:ACP transacylase (MAT) domain; sequence FVFSGQGAQY…VVCSTFLKSS (288 aa). Catalysis depends on serine 1001, which acts as the For acyl/malonyl transferase activity. Positions 1297-1433 are N-terminal hotdog fold; the sequence is QKILQETSLD…CELRLEHPSQ (137 aa). A PKS/mFAS DH domain is found at 1297-1606; sequence QKILQETSLD…FQGLPRRVLN (310 aa). The Proton acceptor; for dehydratase activity role is filled by histidine 1329. The segment at 1329–1604 is product template (PT) domain; sequence HRVNGVKVCT…ITFQGLPRRV (276 aa). A C-terminal hotdog fold region spans residues 1460–1606; the sequence is LDSMLATGMV…FQGLPRRVLN (147 aa). Aspartate 1519 functions as the Proton donor; for dehydratase activity in the catalytic mechanism. The segment at 1619–1648 is disordered; the sequence is APMGRRDVPPSRMDVPPVRSGEGPPTSAPT. Residues 1660-1738 form the Carrier domain; the sequence is TSMDSRLRPL…SFKLFLGLVD (79 aa). Serine 1698 bears the O-(pantetheine 4'-phosphoryl)serine mark. The segment at 1742–1779 is disordered; that stretch reads KSSSGSDGSGRSSPAPGIESGATTPPMSEEDQDKIVSS. A compositionally biased stretch (low complexity) spans 1743–1754; that stretch reads SSSGSDGSGRSS. The tract at residues 1781-2065 is claisen cyclase domain; it reads SLHQFQASST…YVSAFLARAL (285 aa). Serine 1875 serves as the catalytic For Claisen cyclase activity.

The catalysed reaction is 6 malonyl-CoA + acetyl-CoA + 6 H(+) = naphtopyrone YWA1 + 6 CO2 + 7 CoA + H2O. Its pathway is pigment biosynthesis. Non-reducing polyketide synthase; part of the gene cluster that mediates the biosynthesis of aurofusarin, a red mycelium pigment which is acting as a mycotoxin. The first step is performed by the polyketide synthase which condenses one acetyl-CoA and 6 malonyl-CoA units to form the first intermediate, the cyclic heptaketide and yellow pigment YWA1. The C2 hydroxyl group in the pyrone ring of YWA1 is probably formed during ring closure by an aldol-type cyclization reaction. The dehydratase aurZ then acts as the first tailoring enzyme in the aurofusarin biosynthetic pathway by converting YWA1 to nor-rubrofusarin. Nor-rubrofusarin is then methylated to rubrofusarin by the O-methyltransferase aurJ. Rubrofusarin is then transported across the plasma membrane by the rubrofusarin-specific pump aurT for further enzymatic processing by the extracellular complex composed of GIP1, aurF, aurO and aurS to yield aurofusarin. This Gibberella zeae (strain ATCC MYA-4620 / CBS 123657 / FGSC 9075 / NRRL 31084 / PH-1) (Wheat head blight fungus) protein is Non-reducing polyketide synthase PKS12.